The following is a 537-amino-acid chain: O-phosphoserine--tRNA(Cys) ligase (537 aa).

Residues H186–T188, S231–S233, Y273–Y274, and N317 contribute to the substrate site.

Belongs to the class-II aminoacyl-tRNA synthetase family. O-phosphoseryl-tRNA(Cys) synthetase subfamily. As to quaternary structure, homotetramer. Interacts with SepCysS.

The catalysed reaction is tRNA(Cys) + O-phospho-L-serine + ATP = O-phospho-L-seryl-tRNA(Cys) + AMP + diphosphate. In terms of biological role, catalyzes the attachment of O-phosphoserine (Sep) to tRNA(Cys). The chain is O-phosphoserine--tRNA(Cys) ligase from Methanococcus vannielii (strain ATCC 35089 / DSM 1224 / JCM 13029 / OCM 148 / SB).